Here is a 220-residue protein sequence, read N- to C-terminus: Grancalcin (220 aa).

EF-hand domains lie at 51–86 (SPADDSMWTYFTAVAGQDGEVDAEELQRCLTQSGIS), 92–127 (FSLETCRIMIAMLDRDYTGKMGFNEFKELWAALNAW), 122–157 (AALNAWKQNFMTIDQDQSGTVEHHELSQAIALMGYR), and 158–193 (LSPQTLAAIVRRYSKNGRIFFDDYVACCVKLRALTD). Residues D105, D107, T109, K111, E116, D135, D137, S139, T141, and E146 each coordinate Ca(2+).

In terms of assembly, homodimer. Interacts with SRI and LCP1.

It is found in the cytoplasm. It localises to the cytoplasmic granule membrane. Functionally, calcium-binding protein that may play a role in the adhesion of neutrophils to fibronectin. May play a role in the formation of focal adhesions. The polypeptide is Grancalcin (Gca) (Mus musculus (Mouse)).